A 461-amino-acid chain; its full sequence is Photosystem II CP43 reaction center protein (461 aa).

A propeptide spanning residues 1-2 (ME) is cleaved from the precursor. The residue at position 3 (T3) is an N-acetylthreonine. A Phosphothreonine modification is found at T3. Helical transmembrane passes span 57-81 (LFEV…PHLA), 122-143 (LLGP…KDRN), 166-188 (KALY…RKIT), 243-263 (KPFA…LSYS), and 279-300 (WFNN…ASQA). E355 serves as a coordination point for [CaMn4O5] cluster. The helical transmembrane segment at 435 to 459 (RARAAAAGFEKGIDRDFEPVLSMTP) threads the bilayer.

This sequence belongs to the PsbB/PsbC family. PsbC subfamily. PSII is composed of 1 copy each of membrane proteins PsbA, PsbB, PsbC, PsbD, PsbE, PsbF, PsbH, PsbI, PsbJ, PsbK, PsbL, PsbM, PsbT, PsbX, PsbY, PsbZ, Psb30/Ycf12, at least 3 peripheral proteins of the oxygen-evolving complex and a large number of cofactors. It forms dimeric complexes. It depends on Binds multiple chlorophylls and provides some of the ligands for the Ca-4Mn-5O cluster of the oxygen-evolving complex. It may also provide a ligand for a Cl- that is required for oxygen evolution. PSII binds additional chlorophylls, carotenoids and specific lipids. as a cofactor.

Its subcellular location is the plastid. It is found in the chloroplast thylakoid membrane. Its function is as follows. One of the components of the core complex of photosystem II (PSII). It binds chlorophyll and helps catalyze the primary light-induced photochemical processes of PSII. PSII is a light-driven water:plastoquinone oxidoreductase, using light energy to abstract electrons from H(2)O, generating O(2) and a proton gradient subsequently used for ATP formation. This is Photosystem II CP43 reaction center protein from Nicotiana sylvestris (Wood tobacco).